The primary structure comprises 148 residues: 3-dehydroquinate dehydratase (148 aa).

The active-site Proton acceptor is the Tyr23. 3 residues coordinate substrate: Asn75, His81, and Asp88. His101 functions as the Proton donor in the catalytic mechanism. Residues 102–103 and Arg112 each bind substrate; that span reads IS.

It belongs to the type-II 3-dehydroquinase family. As to quaternary structure, homododecamer.

The catalysed reaction is 3-dehydroquinate = 3-dehydroshikimate + H2O. Its pathway is metabolic intermediate biosynthesis; chorismate biosynthesis; chorismate from D-erythrose 4-phosphate and phosphoenolpyruvate: step 3/7. Its function is as follows. Catalyzes a trans-dehydration via an enolate intermediate. The sequence is that of 3-dehydroquinate dehydratase from Methylococcus capsulatus (strain ATCC 33009 / NCIMB 11132 / Bath).